A 391-amino-acid chain; its full sequence is 3-demethoxyubiquinol 3-hydroxylase (391 aa).

The protein belongs to the UbiH/COQ6 family. Component of the Ubi complex metabolon, which regroups five ubiquinone biosynthesis proteins (UbiE, UbiF, UbiG, UbiH and UbiI) and two accessory factors (UbiK and the lipid-binding protein UbiJ). The cofactor is FAD.

Its subcellular location is the cytoplasm. It carries out the reaction a 5-methoxy-2-methyl-3-(all-trans-polyprenyl)benzene-1,4-diol + AH2 + O2 = a 3-demethylubiquinol + A + H2O. It participates in cofactor biosynthesis; ubiquinone biosynthesis. Its function is as follows. Catalyzes the hydroxylation of 2-octaprenyl-3-methyl-6-methoxy-1,4-benzoquinol during ubiquinone biosynthesis. The protein is 3-demethoxyubiquinol 3-hydroxylase (ubiF) of Escherichia coli (strain K12).